Consider the following 386-residue polypeptide: Bifunctional enzyme IspD/IspF (386 aa).

Positions 1 to 230 are 2-C-methyl-D-erythritol 4-phosphate cytidylyltransferase; the sequence is MNSVPSLPGQ…LEEQSMSVIP (230 aa). Positions 231–386 are 2-C-methyl-D-erythritol 2,4-cyclodiphosphate synthase; that stretch reads RTGMGFDVHR…AQAVATVVSG (156 aa). Residues Asp-237 and His-239 each contribute to the a divalent metal cation site. 4-CDP-2-C-methyl-D-erythritol 2-phosphate is bound by residues 237–239 and 263–264; these read DVH and HS. His-271 provides a ligand contact to a divalent metal cation. Residues 285-287, 361-364, and Arg-371 contribute to the 4-CDP-2-C-methyl-D-erythritol 2-phosphate site; these read DIG and TTTE.

This sequence in the N-terminal section; belongs to the IspD/TarI cytidylyltransferase family. IspD subfamily. In the C-terminal section; belongs to the IspF family. The cofactor is a divalent metal cation.

It catalyses the reaction 2-C-methyl-D-erythritol 4-phosphate + CTP + H(+) = 4-CDP-2-C-methyl-D-erythritol + diphosphate. It carries out the reaction 4-CDP-2-C-methyl-D-erythritol 2-phosphate = 2-C-methyl-D-erythritol 2,4-cyclic diphosphate + CMP. It functions in the pathway isoprenoid biosynthesis; isopentenyl diphosphate biosynthesis via DXP pathway; isopentenyl diphosphate from 1-deoxy-D-xylulose 5-phosphate: step 2/6. Its pathway is isoprenoid biosynthesis; isopentenyl diphosphate biosynthesis via DXP pathway; isopentenyl diphosphate from 1-deoxy-D-xylulose 5-phosphate: step 4/6. Its function is as follows. Bifunctional enzyme that catalyzes the formation of 4-diphosphocytidyl-2-C-methyl-D-erythritol from CTP and 2-C-methyl-D-erythritol 4-phosphate (MEP) (IspD), and catalyzes the conversion of 4-diphosphocytidyl-2-C-methyl-D-erythritol 2-phosphate (CDP-ME2P) to 2-C-methyl-D-erythritol 2,4-cyclodiphosphate (ME-CPP) with a corresponding release of cytidine 5-monophosphate (CMP) (IspF). The chain is Bifunctional enzyme IspD/IspF from Novosphingobium aromaticivorans (strain ATCC 700278 / DSM 12444 / CCUG 56034 / CIP 105152 / NBRC 16084 / F199).